The sequence spans 237 residues: dTDP-3-amino-3,4,6-trideoxy-alpha-D-glucopyranose N,N-dimethyltransferase (237 aa).

Residues Tyr14 and Arg17 each contribute to the substrate site. S-adenosyl-L-methionine is bound by residues Tyr21, Ala46, Glu67, 89 to 90 (DM), and Met105. Residues 145–147 (TFA), Ser152, 165–169 (RVSHS), and Arg229 contribute to the substrate site.

The protein belongs to the methyltransferase TylM1/DesVI family. In terms of assembly, homodimer.

The catalysed reaction is dTDP-3-amino-3,4,6-trideoxy-alpha-D-glucose + 2 S-adenosyl-L-methionine = dTDP-alpha-D-desosamine + 2 S-adenosyl-L-homocysteine + 2 H(+). The protein operates within antibiotic biosynthesis. In terms of biological role, S-adenosyl-L-methionine-dependent methyltransferase involved in the biosynthesis of desosamine, found in certain macrolide antibiotics such as erthyromycin, azithromycin, clarithromycin, and methymycin. Catalyzes the last step in the biosynthesis of dTDP-desosamine, i.e. the N,N-dimethylation of the 3-amino group of dTDP-3-amino-3,4,6-trideoxy-alpha-D-glucose. This Streptomyces venezuelae protein is dTDP-3-amino-3,4,6-trideoxy-alpha-D-glucopyranose N,N-dimethyltransferase.